The sequence spans 205 residues: Large ribosomal subunit protein bL25 (205 aa).

It belongs to the bacterial ribosomal protein bL25 family. CTC subfamily. Part of the 50S ribosomal subunit; part of the 5S rRNA/L5/L18/L25 subcomplex. Contacts the 5S rRNA. Binds to the 5S rRNA independently of L5 and L18.

In terms of biological role, this is one of the proteins that binds to the 5S RNA in the ribosome where it forms part of the central protuberance. This Bartonella bacilliformis (strain ATCC 35685 / KC583 / Herrer 020/F12,63) protein is Large ribosomal subunit protein bL25.